The sequence spans 496 residues: NADH-quinone oxidoreductase subunit N (496 aa).

Transmembrane regions (helical) follow at residues 16–36 (SLSP…VGAI), 46–66 (CVFC…FNGL), 79–99 (ISII…PLAL), 116–136 (FLFM…LIIF), 166–186 (FAMG…FYLA), 208–228 (LIIL…LSLI), 245–267 (LAGY…IFAM), 278–298 (DMLY…ALVQ), 304–324 (MLAF…VANS), 331–351 (LFFY…MLWV), 382–402 (AVIM…SVFW), 422–442 (IIMI…VFMF), and 464–484 (VIVG…GAIL).

The protein belongs to the complex I subunit 2 family. In terms of assembly, NDH-1 is composed of 14 different subunits. Subunits NuoA, H, J, K, L, M, N constitute the membrane sector of the complex.

The protein localises to the cell inner membrane. The catalysed reaction is a quinone + NADH + 5 H(+)(in) = a quinol + NAD(+) + 4 H(+)(out). In terms of biological role, NDH-1 shuttles electrons from NADH, via FMN and iron-sulfur (Fe-S) centers, to quinones in the respiratory chain. The immediate electron acceptor for the enzyme in this species is believed to be ubiquinone. Couples the redox reaction to proton translocation (for every two electrons transferred, four hydrogen ions are translocated across the cytoplasmic membrane), and thus conserves the redox energy in a proton gradient. The chain is NADH-quinone oxidoreductase subunit N from Campylobacter concisus (strain 13826).